The following is a 447-amino-acid chain: Argininosuccinate synthase (447 aa).

Residues 17–25 (AFSGGLDTS) and Ala43 contribute to the ATP site. Position 99 (Tyr99) interacts with L-citrulline. Positions 129 and 131 each coordinate ATP. Positions 131, 135, and 136 each coordinate L-aspartate. Position 135 (Asn135) interacts with L-citrulline. ATP is bound at residue Asp136. L-citrulline is bound by residues Arg139 and Ser192. Residue Asp194 coordinates ATP. Thr201, Glu203, and Glu280 together coordinate L-citrulline.

This sequence belongs to the argininosuccinate synthase family. Type 2 subfamily. Homotetramer.

The protein localises to the cytoplasm. The enzyme catalyses L-citrulline + L-aspartate + ATP = 2-(N(omega)-L-arginino)succinate + AMP + diphosphate + H(+). It functions in the pathway amino-acid biosynthesis; L-arginine biosynthesis; L-arginine from L-ornithine and carbamoyl phosphate: step 2/3. This chain is Argininosuccinate synthase, found in Paracidovorax citrulli (strain AAC00-1) (Acidovorax citrulli).